The primary structure comprises 647 residues: Exoribonuclease 2 (647 aa).

One can recognise an RNB domain in the interval 190 to 519 (REDLTSLPFV…NHRLLKAIIK (330 aa)). The S1 motif domain maps to 564 to 646 (EQRFSAEVID…ETRSIVARPV (83 aa)).

It belongs to the RNR ribonuclease family. RNase II subfamily.

Its subcellular location is the cytoplasm. It catalyses the reaction Exonucleolytic cleavage in the 3'- to 5'-direction to yield nucleoside 5'-phosphates.. Its function is as follows. Involved in mRNA degradation. Hydrolyzes single-stranded polyribonucleotides processively in the 3' to 5' direction. This is Exoribonuclease 2 from Erwinia tasmaniensis (strain DSM 17950 / CFBP 7177 / CIP 109463 / NCPPB 4357 / Et1/99).